The following is a 261-amino-acid chain: Indole-3-glycerol phosphate synthase (261 aa).

The protein belongs to the TrpC family.

It carries out the reaction 1-(2-carboxyphenylamino)-1-deoxy-D-ribulose 5-phosphate + H(+) = (1S,2R)-1-C-(indol-3-yl)glycerol 3-phosphate + CO2 + H2O. It functions in the pathway amino-acid biosynthesis; L-tryptophan biosynthesis; L-tryptophan from chorismate: step 4/5. In Alkaliphilus metalliredigens (strain QYMF), this protein is Indole-3-glycerol phosphate synthase.